We begin with the raw amino-acid sequence, 226 residues long: Thioredoxin domain-containing protein 9 (226 aa).

Residues 52–180 enclose the Thioredoxin domain; that stretch reads LEALKKAQQQ…TTETLEWRLG (129 aa). 3 positions are modified to phosphoserine: serine 188, serine 221, and serine 223.

Forms ternary complexes with the chaperonin TCP1 complex, spanning the cylindrical chaperonin cavity and contacting at least 2 subunits.

It localises to the cytoplasm. It is found in the nucleus. Its subcellular location is the cytoskeleton. The protein localises to the microtubule organizing center. The protein resides in the centrosome. It localises to the midbody. In terms of biological role, significantly diminishes the chaperonin TCP1 complex ATPase activity, thus negatively impacts protein folding, including that of actin or tubulin. This is Thioredoxin domain-containing protein 9 (TXNDC9) from Bos taurus (Bovine).